The following is an 836-amino-acid chain: MASKRKSTTPCMVRTSQVLEQDMLEEADRAKDKGAGMPQSDVTKDSWAAEPEHSSKETEVVEVKSMGENLSKKLQGGYECKYCPYSTQNLNEFTEHVDMQHPNVILNPLYVCAECNFTTKKYDSLSDHNSKFHPGETNFKLKLIKRNNQTVLEQSIEATNHVVPITASGPGSSDNDPGVSVGKTPMTKTGKLKADAKKVPKKPDEAAPENHMEGTARLVTDTAEILARLGSVELLQDSLGHVMPSVQLPPNINLVPKVPVPLNTTKYNSALDTNATMINSFNKFPYPTQAELSWLTAASKHPEEHIRIWFATQRLKHGISWSPEEVEEARKKMFNGTIQSVPPTITVLPAQLTPTKVSQPILQTALPCQILGQPSLVLTQVTSGSTTVSCSPITLAVAGVTNHGQKRPLVTPQAAPEPKRPHIAQVPEPPPKVANTPLTPASDRKKTKLQIAHLKASFLQSQFPDDAEVYRLIEVTGLARSEIKKWFSDHRYRCQRGIVHITSESLAKDQMAITGTRHGRTYHVYPDFAPQKFKEKSQGQLKTLEDSFLKSSFPTQAEVERLRVETKLSRREIDSWFSERRKLRDSMEQAVLDSMGSGKKGSDAVAPNGALSRLDQLSGAQLAGSLPSPSSAIVQNQEQVHLLRSTFARTQWPTPQEYDQLAAKTGLVRTEIVRWFKENRCLLKTGTLSWLEQYQRHHMSDDRGRDAVSRKVAKQVAESPKNGSEAAHQYAKDPKALSEEDSEKLVPRMKVGGDPTKDCLAGKPSEATSDRSEGSRDGQGSEENEESGIVDFVEVTVGEEDAISEKWGSWSRRVAEGTVERADSDSDSTPAEAGQA.

A disordered region spans residues 1-61 (MASKRKSTTP…EHSSKETEVV (61 aa)). Polar residues predominate over residues 8–19 (TTPCMVRTSQVL). The interaction with EFNB1 stretch occupies residues 27-77 (ADRAKDKGAGMPQSDVTKDSWAAEPEHSSKETEVVEVKSMGENLSKKLQGG). The segment covering 50–61 (EPEHSSKETEVV) has biased composition (basic and acidic residues). Lys64 participates in a covalent cross-link: Glycyl lysine isopeptide (Lys-Gly) (interchain with G-Cter in SUMO2). 2 consecutive C2H2-type zinc fingers follow at residues 78–101 (YECKYCPYSTQNLNEFTEHVDMQH) and 110–133 (YVCAECNFTTKKYDSLSDHNSKFH). Residues 164-214 (PITASGPGSSDNDPGVSVGKTPMTKTGKLKADAKKVPKKPDEAAPENHMEG) form a disordered region. Over residues 192 to 214 (LKADAKKVPKKPDEAAPENHMEG) the composition is skewed to basic and acidic residues. The tract at residues 195–358 (DAKKVPKKPD…PAQLTPTKVS (164 aa)) is required for homodimerization. 4 DNA-binding regions (homeobox) span residues 263–324 (NTTK…WSPE), 439–501 (TPAS…IVHI), 530–591 (PQKF…EQAV), and 628–690 (SPSS…TLSW). The required for repressor activity stretch occupies residues 263 to 446 (NTTKYNSALD…PLTPASDRKK (184 aa)). The tract at residues 263-497 (NTTKYNSALD…SDHRYRCQRG (235 aa)) is required for interaction with NFYA. A required for nuclear localization region spans residues 317-446 (HGISWSPEEV…PLTPASDRKK (130 aa)). The disordered stretch occupies residues 404–442 (GQKRPLVTPQAAPEPKRPHIAQVPEPPPKVANTPLTPAS). Lys455 is covalently cross-linked (Glycyl lysine isopeptide (Lys-Gly) (interchain with G-Cter in SUMO2)). 3 stretches are compositionally biased toward basic and acidic residues: residues 699 to 709 (MSDDRGRDAVS), 730 to 746 (YAKDPKALSEEDSEKLV), and 813 to 824 (RVAEGTVERADS). A disordered region spans residues 699–836 (MSDDRGRDAV…DSTPAEAGQA (138 aa)). Phosphoserine occurs at positions 824 and 826.

The protein belongs to the ZHX family. Homodimer (via homeobox domain 1). Heterodimer with ZHX1 (via homeobox domain 1). Heterodimer with ZHX3 (via homeobox domain 1). Heterodimerization with ZHX1 is not necessary for repressor activity. Interacts (via homeobox domain) with NFYA (via N-terminus). Interacts with EFNB1 intracellular domain peptide; the interaction enhances ZHX2 transcriptional repression activity. Expressed in retina where it localizes to Muller glial cells of the inner nuclear layer (at protein level). Detected in heart, brain, spleen, lung, liver, skeletal muscle, kidney and testis.

It is found in the nucleus. Acts as a transcriptional repressor. Represses the promoter activity of the CDC25C gene stimulated by NFYA. May play a role in retinal development where it regulates the composition of bipolar cell populations, by promoting differentiation of bipolar OFF-type cells. In the brain, may promote maintenance and suppress differentiation of neural progenitor cells in the developing cortex. The protein is Zinc fingers and homeoboxes protein 2 (Zhx2) of Mus musculus (Mouse).